A 382-amino-acid polypeptide reads, in one-letter code: MKKIILAAGGTGGHFFPAVALGEELVKRGYEVHFITDLRCQKYINQNLGLIFHILDLKRSSNIFLFLPNLSIAILKAIKLLYNIRSSAIIGFGSYPVISSMFAAVFLRVPIIIHEQNSYLGKVNKFFASFAKRIAISYEEVKNLPEFAKSKIVVTGGIVRENIRELDSIVYSASHRGLITGSKKIKKRLDSVVTPQNDKLFTIFIFGGSQGATLFSELIPASIQILMQKQPNLKLNIIQQAALDDQVKIKDIYSKLNINYECAEFFDNMALQYKEADVVISRAGASTIEELTYIGLPAIFIPLPSAADNHQYYNAKLLEDKKAGWCLEQSDISAGKLADKILDLISNPKILEEASKNLLKRRKEGHVLLSDLIEGVIYHPVA.

UDP-N-acetyl-alpha-D-glucosamine contacts are provided by residues 11-13 (TGG), asparagine 117, arginine 160, serine 209, and glutamine 311.

It belongs to the glycosyltransferase 28 family. MurG subfamily.

The protein localises to the cell inner membrane. It catalyses the reaction di-trans,octa-cis-undecaprenyl diphospho-N-acetyl-alpha-D-muramoyl-L-alanyl-D-glutamyl-meso-2,6-diaminopimeloyl-D-alanyl-D-alanine + UDP-N-acetyl-alpha-D-glucosamine = di-trans,octa-cis-undecaprenyl diphospho-[N-acetyl-alpha-D-glucosaminyl-(1-&gt;4)]-N-acetyl-alpha-D-muramoyl-L-alanyl-D-glutamyl-meso-2,6-diaminopimeloyl-D-alanyl-D-alanine + UDP + H(+). The protein operates within cell wall biogenesis; peptidoglycan biosynthesis. Functionally, cell wall formation. Catalyzes the transfer of a GlcNAc subunit on undecaprenyl-pyrophosphoryl-MurNAc-pentapeptide (lipid intermediate I) to form undecaprenyl-pyrophosphoryl-MurNAc-(pentapeptide)GlcNAc (lipid intermediate II). This Rickettsia akari (strain Hartford) protein is UDP-N-acetylglucosamine--N-acetylmuramyl-(pentapeptide) pyrophosphoryl-undecaprenol N-acetylglucosamine transferase.